Reading from the N-terminus, the 250-residue chain is 5-oxoprolinase subunit A (250 aa).

Belongs to the LamB/PxpA family. Forms a complex composed of PxpA, PxpB and PxpC.

The enzyme catalyses 5-oxo-L-proline + ATP + 2 H2O = L-glutamate + ADP + phosphate + H(+). Its function is as follows. Catalyzes the cleavage of 5-oxoproline to form L-glutamate coupled to the hydrolysis of ATP to ADP and inorganic phosphate. The chain is 5-oxoprolinase subunit A from Pseudomonas fluorescens (strain Pf0-1).